The primary structure comprises 107 residues: Putative double-stranded DNA mimic protein HSM_1473 (107 aa).

This sequence belongs to the putative dsDNA mimic protein family.

Its function is as follows. May act as a double-stranded DNA (dsDNA) mimic. Probably regulates the activity of a dsDNA-binding protein. The sequence is that of Putative double-stranded DNA mimic protein HSM_1473 from Histophilus somni (strain 2336) (Haemophilus somnus).